Here is a 24-residue protein sequence, read N- to C-terminus: Grammistin Pp 4b (24 aa).

As to quaternary structure, exists as aggregates of 3-4 molecules. Expressed by the skin glands.

Its subcellular location is the secreted. Thanks to its abundant amphiphilic alpha-helices, it may integrate into membrane phospholipids, leading to lysis of the membrane. Its hemolytic activity is inhibited by phospholipids, but not by cholesterol. Has antibacterial activity with a broad spectrum against various species of bacteria including both Gram-positive and Gram-negative groups. Also has ichthyotoxic activity. The chain is Grammistin Pp 4b from Pogonoperca punctata (Clown grouper).